A 106-amino-acid polypeptide reads, in one-letter code: CRISPR-associated endoribonuclease Cas2 (106 aa).

Asp22 provides a ligand contact to Mg(2+).

This sequence belongs to the CRISPR-associated endoribonuclease Cas2 protein family. In terms of assembly, homodimer, forms a heterotetramer with a Cas1 homodimer. It depends on Mg(2+) as a cofactor.

Its function is as follows. CRISPR (clustered regularly interspaced short palindromic repeat), is an adaptive immune system that provides protection against mobile genetic elements (viruses, transposable elements and conjugative plasmids). CRISPR clusters contain sequences complementary to antecedent mobile elements and target invading nucleic acids. CRISPR clusters are transcribed and processed into CRISPR RNA (crRNA). Functions as a ssRNA-specific endoribonuclease. Involved in the integration of spacer DNA into the CRISPR cassette. The sequence is that of CRISPR-associated endoribonuclease Cas2 from Fusobacterium nucleatum subsp. nucleatum (strain ATCC 25586 / DSM 15643 / BCRC 10681 / CIP 101130 / JCM 8532 / KCTC 2640 / LMG 13131 / VPI 4355).